A 308-amino-acid polypeptide reads, in one-letter code: MKHYEVEIRDAKTREKLCFLDKVEPQATISEIKTLFTKTHPQWYPARQSLRLDPKGKSLKDEDVLQKLPVGTTATLYFRDLGAQISWVTVFLTEYAGPLFIYLLFYFRVPFIYGRKYDFTSSRHTVVHLACMCHSFHYIKRLLETLFVHRFSHGTMPLRNIFKNCTYYWGFAAWMAYYINHPLYTPPTYGVQQVKLALAVFVICQLGNFSIHMALRDLRPAGSKTRKIPYPTKNPFTWLFLLVSCPNYTYEVGSWIGFAILTQCVPVALFSLVGFTQMTIWAKGKHRSYLKEFRDYPPLRMPIIPFLL.

The Cytoplasmic segment spans residues 1–86 (MKHYEVEIRD…YFRDLGAQIS (86 aa)). N6-acetyllysine is present on lysine 22. Position 58 is a phosphoserine (serine 58). Lysine 60 is modified (N6-acetyllysine). Residues 87-106 (WVTVFLTEYAGPLFIYLLFY) form a helical membrane-spanning segment. Residues 107 to 124 (FRVPFIYGRKYDFTSSRH) are Lumenal-facing. Residues 125–147 (TVVHLACMCHSFHYIKRLLETLF) traverse the membrane as a helical segment. Residues 148 to 158 (VHRFSHGTMPL) are Cytoplasmic-facing. Residues 159–180 (RNIFKNCTYYWGFAAWMAYYIN) form a helical membrane-spanning segment. Topologically, residues 181–189 (HPLYTPPTY) are lumenal. The helical transmembrane segment at 190–216 (GVQQVKLALAVFVICQLGNFSIHMALR) threads the bilayer. The Cytoplasmic segment spans residues 217–245 (DLRPAGSKTRKIPYPTKNPFTWLFLLVSC). The chain crosses the membrane as a helical span at residues 246–262 (PNYTYEVGSWIGFAILT). The Lumenal portion of the chain corresponds to 263–264 (QC). The chain crosses the membrane as a helical span at residues 265–292 (VPVALFSLVGFTQMTIWAKGKHRSYLKE). The Cytoplasmic portion of the chain corresponds to 293–308 (FRDYPPLRMPIIPFLL).

The protein belongs to the steroid 5-alpha reductase family. In terms of assembly, interacts with ELOVL1 and LASS2. Post-translationally, glycosylated.

It is found in the endoplasmic reticulum membrane. It carries out the reaction a very-long-chain 2,3-saturated fatty acyl-CoA + NADP(+) = a very-long-chain (2E)-enoyl-CoA + NADPH + H(+). The catalysed reaction is octadecanoyl-CoA + NADP(+) = (2E)-octadecenoyl-CoA + NADPH + H(+). It catalyses the reaction (2E,7Z,10Z,13Z,16Z)-docosapentaenoyl-CoA + NADPH + H(+) = (7Z,10Z,13Z,16Z)-docosatetraenoyl-CoA + NADP(+). The enzyme catalyses (2E,7Z,10Z,13Z,16Z,19Z)-docosahexaenoyl-CoA + NADPH + H(+) = (7Z,10Z,13Z,16Z,19Z)-docosapentaenoyl-CoA + NADP(+). It carries out the reaction (2E,8Z,11Z,14Z)-eicosatetraenoyl-CoA + NADPH + H(+) = (8Z,11Z,14Z)-eicosatrienoyl-CoA + NADP(+). The catalysed reaction is (2E)-hexadecenoyl-CoA + NADPH + H(+) = hexadecanoyl-CoA + NADP(+). Its pathway is lipid metabolism; fatty acid biosynthesis. It participates in lipid metabolism; sphingolipid metabolism. Functionally, involved in both the production of very long-chain fatty acids for sphingolipid synthesis and the degradation of the sphingosine moiety in sphingolipids through the sphingosine 1-phosphate metabolic pathway. Catalyzes the last of the four reactions of the long-chain fatty acids elongation cycle. This endoplasmic reticulum-bound enzymatic process, allows the addition of 2 carbons to the chain of long- and very long-chain fatty acids/VLCFAs per cycle. This enzyme reduces the trans-2,3-enoyl-CoA fatty acid intermediate to an acyl-CoA that can be further elongated by entering a new cycle of elongation. Thereby, it participates in the production of VLCFAs of different chain lengths that are involved in multiple biological processes as precursors of membrane lipids and lipid mediators. Catalyzes the saturation step of the sphingosine 1-phosphate metabolic pathway, the conversion of trans-2-hexadecenoyl-CoA to palmitoyl-CoA. In Mus musculus (Mouse), this protein is Very-long-chain enoyl-CoA reductase (Tecr).